The chain runs to 134 residues: MTAPEQTFRNKKQRKQQVKLRKPGFAVAKYVRMSPRKVRLVVDVIRGKSVQDAEDLLRFIPRSASEPVAKVLNSAKANALHNDEMLEDRLFVKEAYVDAGPTLKRLIPRARGSANIIKKRTSHITIIVAEKGNK.

This sequence belongs to the universal ribosomal protein uL22 family. As to quaternary structure, part of the 50S ribosomal subunit. Contacts protein L32.

In terms of biological role, this protein binds specifically to 23S rRNA; its binding is stimulated by other ribosomal proteins, e.g. L4, L17, and L20. It is important during the early stages of 50S assembly. It makes multiple contacts with different domains of the 23S rRNA in the assembled 50S subunit and ribosome. The globular domain of the protein is located by the polypeptide exit tunnel on the outside of the subunit while an extended beta-hairpin forms part of the wall of the tunnel. Forms a pair of 'tweezers' with L32 that hold together two different domains of the 23S rRNA. Interacts with the tunnel-blocking modified macrolide azithromycin. Upon binding of the macrolide troleadomycin to the ribosome, the tip of the beta-hairpin is displaced, which severely restricts the tunnel. This and experiments in E.coli have led to the suggestion that it is part of the gating mechanism involved in translation arrest in the absence of the protein export system. This Deinococcus radiodurans (strain ATCC 13939 / DSM 20539 / JCM 16871 / CCUG 27074 / LMG 4051 / NBRC 15346 / NCIMB 9279 / VKM B-1422 / R1) protein is Large ribosomal subunit protein uL22 (rplV).